Consider the following 241-residue polypeptide: Lipopolysaccharide export system ATP-binding protein LptB (241 aa).

The ABC transporter domain maps to 4 to 237; that stretch reads LTAKNLAKAY…EHVKRVYLGE (234 aa). 36–43 serves as a coordination point for ATP; the sequence is GPNGAGKT.

The protein belongs to the ABC transporter superfamily. Outer membrane lipopolysaccharide export (TC 1.B.42) family. In terms of assembly, component of the lipopolysaccharide transport and assembly complex. The LptBFG transporter is composed of two ATP-binding proteins (LptB) and two transmembrane proteins (LptF and LptG).

The protein resides in the cytoplasm. The protein localises to the cell inner membrane. Part of the ABC transporter complex LptBFG involved in the translocation of lipopolysaccharide (LPS) from the inner membrane to the outer membrane. Probably responsible for energy coupling to the transport system. In Escherichia coli O157:H7, this protein is Lipopolysaccharide export system ATP-binding protein LptB (lptB).